Reading from the N-terminus, the 160-residue chain is uncharacterized protein (160 aa).

Residues 137–157 (YNILFVVVILLLLFVAWRCYV) form a helical membrane-spanning segment.

The protein localises to the host membrane. It localises to the virion. This is an uncharacterized protein from Acanthamoeba polyphaga mimivirus (APMV).